Here is a 331-residue protein sequence, read N- to C-terminus: Anthranilate phosphoribosyltransferase (331 aa).

Residues Gly-79, 82 to 83 (GD), Thr-87, 89 to 92 (NVST), 107 to 115 (KHGNYGVSS), and Ser-119 each bind 5-phospho-alpha-D-ribose 1-diphosphate. Gly-79 contacts anthranilate. Ser-91 serves as a coordination point for Mg(2+). Asn-110 serves as a coordination point for anthranilate. Arg-165 lines the anthranilate pocket. Residues Asp-223 and Glu-224 each contribute to the Mg(2+) site.

Belongs to the anthranilate phosphoribosyltransferase family. As to quaternary structure, homodimer. Requires Mg(2+) as cofactor.

It catalyses the reaction N-(5-phospho-beta-D-ribosyl)anthranilate + diphosphate = 5-phospho-alpha-D-ribose 1-diphosphate + anthranilate. It functions in the pathway amino-acid biosynthesis; L-tryptophan biosynthesis; L-tryptophan from chorismate: step 2/5. Its function is as follows. Catalyzes the transfer of the phosphoribosyl group of 5-phosphorylribose-1-pyrophosphate (PRPP) to anthranilate to yield N-(5'-phosphoribosyl)-anthranilate (PRA). This is Anthranilate phosphoribosyltransferase from Christiangramia forsetii (strain DSM 17595 / CGMCC 1.15422 / KT0803) (Gramella forsetii).